Here is a 247-residue protein sequence, read N- to C-terminus: GTP cyclohydrolase 1 type 2 homolog (247 aa).

A divalent metal cation-binding residues include His-63, His-64, Asp-101, His-215, and Glu-219.

This sequence belongs to the GTP cyclohydrolase I type 2/NIF3 family. Toroid-shaped homohexamer. In the hexamer, 3 dimers assemble to form a ring-like structure surrounding a central hole.

Provides significant protection from radiation damage and may be involved in the degradation of radiation-damaged nucleotides. The polypeptide is GTP cyclohydrolase 1 type 2 homolog (ybgI) (Escherichia coli O157:H7).